We begin with the raw amino-acid sequence, 1711 residues long: Hybrid PKS-NRPS synthetase TAS1 (1711 aa).

The condensation (C) domain stretch occupies residues 43 to 397 (APLSKMQRAL…RNGLNSEHRV (355 aa)). The tract at residues 506 to 907 (QQQATLRPEQ…TVLLYGRINN (402 aa)) is adenylation (A) domain. In terms of domain architecture, Carrier 1 spans 1043 to 1119 (LEWAAAKARI…SQVGLVQSRR (77 aa)). Residue Ser-1079 is modified to O-(pantetheine 4'-phosphoryl)serine. The segment covering 1114-1127 (LVQSRRGSSGSPRT) has biased composition (polar residues). Positions 1114–1159 (LVQSRRGSSGSPRTVRSHARPQRKAKTPPRQARPETPESDYDQLPD) are disordered. Residues 1128-1140 (VRSHARPQRKAKT) show a composition bias toward basic residues. Residues 1159–1236 (DLRDDVQQSI…AQVELLGRFT (78 aa)) enclose the Carrier 2 domain. Position 1195 is an O-(pantetheine 4'-phosphoryl)serine (Ser-1195). Positions 1266 to 1683 (REQYAIVGMS…GSTAHVVLSA (418 aa)) constitute a Ketosynthase family 3 (KS3) domain. Active-site for beta-ketoacyl synthase activity residues include Cys-1429, His-1565, and Asn-1608.

It in the N-terminal section; belongs to the NRP synthetase family. Pantetheine 4'-phosphate serves as cofactor.

It catalyses the reaction acetoacetyl-CoA + L-isoleucine + ATP = tenuazonic acid + AMP + diphosphate + CoA + 2 H(+). Functionally, hybrid PKS-NRPS synthetase that mediates the biosynthesis of the toxin tenuazonic acid (TeA), an inhibitor of protein biosynthesis on ribosomes by suppressing the release of new protein. TAS1 alone is sufficient for TeA synthesis via the condensation of isoleucine (Ile) with acetoacetyl-CoA by the N-terminal NRPS module and subsequent cyclization conducted by the C-terminal KS domain. This is Hybrid PKS-NRPS synthetase TAS1 from Botryobasidium botryosum (strain FD-172 SS1).